We begin with the raw amino-acid sequence, 308 residues long: Ribosomal protein uL3 glutamine methyltransferase (308 aa).

The protein belongs to the protein N5-glutamine methyltransferase family. PrmB subfamily.

It carries out the reaction L-glutaminyl-[ribosomal protein uL3] + S-adenosyl-L-methionine = N(5)-methyl-L-glutaminyl-[ribosomal protein uL3] + S-adenosyl-L-homocysteine + H(+). Functionally, methylates large ribosomal subunit protein uL3 on a specific glutamine residue. The polypeptide is Ribosomal protein uL3 glutamine methyltransferase (Xanthomonas campestris pv. campestris (strain ATCC 33913 / DSM 3586 / NCPPB 528 / LMG 568 / P 25)).